The chain runs to 90 residues: Acylphosphatase (90 aa).

In terms of domain architecture, Acylphosphatase-like spans alanine 3–glycine 90. Active-site residues include arginine 18 and asparagine 36.

This sequence belongs to the acylphosphatase family.

It carries out the reaction an acyl phosphate + H2O = a carboxylate + phosphate + H(+). In Leuconostoc mesenteroides subsp. mesenteroides (strain ATCC 8293 / DSM 20343 / BCRC 11652 / CCM 1803 / JCM 6124 / NCDO 523 / NBRC 100496 / NCIMB 8023 / NCTC 12954 / NRRL B-1118 / 37Y), this protein is Acylphosphatase (acyP).